A 247-amino-acid polypeptide reads, in one-letter code: Geranylgeranylglyceryl phosphate synthase (247 aa).

Positions 23 and 52 each coordinate Mg(2+). Residues 171-177 (YLEAGSG), 203-204 (GG), and 225-226 (GT) each bind sn-glycerol 1-phosphate.

This sequence belongs to the GGGP/HepGP synthase family. Group II subfamily. Requires Mg(2+) as cofactor.

Its subcellular location is the cytoplasm. It carries out the reaction sn-glycerol 1-phosphate + (2E,6E,10E)-geranylgeranyl diphosphate = sn-3-O-(geranylgeranyl)glycerol 1-phosphate + diphosphate. Its pathway is membrane lipid metabolism; glycerophospholipid metabolism. Its function is as follows. Prenyltransferase that catalyzes the transfer of the geranylgeranyl moiety of geranylgeranyl diphosphate (GGPP) to the C3 hydroxyl of sn-glycerol-1-phosphate (G1P). This reaction is the first ether-bond-formation step in the biosynthesis of archaeal membrane lipids. This chain is Geranylgeranylglyceryl phosphate synthase, found in Methanosarcina mazei (strain ATCC BAA-159 / DSM 3647 / Goe1 / Go1 / JCM 11833 / OCM 88) (Methanosarcina frisia).